The primary structure comprises 68 residues: Large ribosomal subunit protein bL35 (68 aa).

It belongs to the bacterial ribosomal protein bL35 family.

This is Large ribosomal subunit protein bL35 from Rickettsia felis (strain ATCC VR-1525 / URRWXCal2) (Rickettsia azadi).